Consider the following 354-residue polypeptide: MRNHQDPIETDAVIVGAGPVGLFQVFELGLLEIKAHVVDSLAYPGGQCIELYPDKPIYDIPAVPVCTGRELTQNLLKQIAPFGATFHYGQEVTVVEKQSDGRFFVETSKGTRFLSKTIFIAAGVGAFQPRTLKVDGLEVFEDSQLFYRVRNPADFADKNLVIVGGGDSALDWALDFVKDGPNKAASVILIHRRDGFKAAPASVAKMRELCDALEMQFIVGQVTGFEAQDSLLTGIKVTGADGVTRVVPLDVLLVFFGLSPKLGPIAEWGLDIERKQLKVDTEKFSTSEPGIFAVGDINIYPGKKKLILSGFHECALAAFGAMPIISPEKKVFLQYTTTSPKLHKVLGVESPVFD.

Positions 39, 47, 52, 92, 127, 296, and 337 each coordinate FAD.

It belongs to the ferredoxin--NADP reductase type 2 family. Homodimer. Requires FAD as cofactor.

It carries out the reaction 2 reduced [2Fe-2S]-[ferredoxin] + NADP(+) + H(+) = 2 oxidized [2Fe-2S]-[ferredoxin] + NADPH. The polypeptide is Ferredoxin--NADP reductase (Albidiferax ferrireducens (strain ATCC BAA-621 / DSM 15236 / T118) (Rhodoferax ferrireducens)).